We begin with the raw amino-acid sequence, 251 residues long: Carbohydrate deacetylase (251 aa).

2 residues coordinate Mg(2+): His59 and His122.

This sequence belongs to the YdjC deacetylase family. As to quaternary structure, homodimer. The cofactor is Mg(2+).

Its function is as follows. Probably catalyzes the deacetylation of acetylated carbohydrates an important step in the degradation of oligosaccharides. The chain is Carbohydrate deacetylase from Vibrio parahaemolyticus serotype O3:K6 (strain RIMD 2210633).